Consider the following 90-residue polypeptide: U7-theraphotoxin-Hhn1a 3 (90 aa).

The first 26 residues, 1–26 (MKTAIFTVVLALAVFAVLSFGWEANG), serve as a signal peptide directing secretion. A propeptide spanning residues 27–50 (KALSEEFTELIHEKEAASETEARE) is cleaved from the precursor. 3 cysteine pairs are disulfide-bonded: Cys-51/Cys-65, Cys-58/Cys-70, and Cys-64/Cys-81.

Belongs to the neurotoxin 10 (Hwtx-1) family. 13 (Hntx-13) subfamily. In terms of tissue distribution, expressed by the venom gland.

The protein localises to the secreted. Functionally, ion channel inhibitor. The chain is U7-theraphotoxin-Hhn1a 3 from Cyriopagopus hainanus (Chinese bird spider).